The following is a 320-amino-acid chain: Apolipoprotein E (320 aa).

The signal sequence occupies residues 1–18 (MKVLWAALLVAFLAGCQG). Tandem repeats lie at residues 82–103 (ALME…EQLS), 104–125 (PVAE…ARLG), 126–147 (ADME…AMLG), 148–169 (QSTD…KRLL), 170–191 (RDVD…EGAE), 192–213 (RGVS…ARAA), 214–236 (TVGS…ERLR), and 237–258 (ARME…EQVE). The tract at residues 82–258 (ALMEETMKEL…RLDEVKEQVE (177 aa)) is 8 X 22 AA approximate tandem repeats. At methionine 145 the chain carries Methionine sulfoxide. Serine 149 carries the phosphoserine modification. Positions 160-170 (HLRKLRKRLLR) are LDL and other lipoprotein receptors binding. Residue 164–167 (LRKR) coordinates heparin. Positions 212-293 (AATVGSSLAS…SWFEPLVEDM (82 aa)) are lipid-binding and lipoprotein association. Threonine 214 is a glycosylation site (O-linked (GalNAc...) threonine). Residue 232–239 (GERLRARM) coordinates heparin. The segment at 269–320 (QQMRLQAEAFQARLKSWFEPLVEDMQRQWAGLVEKVQAAVGASTTPVPSDNH) is homooligomerization. Positions 281–293 (RLKSWFEPLVEDM) are specificity for association with VLDL.

It belongs to the apolipoprotein A1/A4/E family. As to quaternary structure, homotetramer. May interact with ABCA1; functionally associated with ABCA1 in the biogenesis of HDLs. May interact with APP/A4 amyloid-beta peptide; the interaction is extremely stable in vitro but its physiological significance is unclear. May interact with MAPT. May interact with MAP2. In the cerebrospinal fluid, interacts with secreted SORL1. Interacts with PMEL; this allows the loading of PMEL luminal fragment on ILVs to induce fibril nucleation. APOE exists as multiple glycosylated and sialylated glycoforms within cells and in plasma. The extent of glycosylation and sialylation are tissue and context specific. In terms of processing, glycated in plasma VLDL. Post-translationally, phosphorylated by FAM20C in the extracellular medium.

It is found in the secreted. The protein localises to the extracellular space. The protein resides in the extracellular matrix. Its subcellular location is the extracellular vesicle. It localises to the endosome. It is found in the multivesicular body. APOE is an apolipoprotein, a protein associating with lipid particles, that mainly functions in lipoprotein-mediated lipid transport between organs via the plasma and interstitial fluids. APOE is a core component of plasma lipoproteins and is involved in their production, conversion and clearance. Apolipoproteins are amphipathic molecules that interact both with lipids of the lipoprotein particle core and the aqueous environment of the plasma. As such, APOE associates with chylomicrons, chylomicron remnants, very low density lipoproteins (VLDL) and intermediate density lipoproteins (IDL) but shows a preferential binding to high-density lipoproteins (HDL). It also binds a wide range of cellular receptors including the LDL receptor/LDLR, the LDL receptor-related proteins LRP1, LRP2 and LRP8 and the very low-density lipoprotein receptor/VLDLR that mediate the cellular uptake of the APOE-containing lipoprotein particles. Finally, APOE also has a heparin-binding activity and binds heparan-sulfate proteoglycans on the surface of cells, a property that supports the capture and the receptor-mediated uptake of APOE-containing lipoproteins by cells. A main function of APOE is to mediate lipoprotein clearance through the uptake of chylomicrons, VLDLs, and HDLs by hepatocytes. APOE is also involved in the biosynthesis by the liver of VLDLs as well as their uptake by peripheral tissues ensuring the delivery of triglycerides and energy storage in muscle, heart and adipose tissues. By participating in the lipoprotein-mediated distribution of lipids among tissues, APOE plays a critical role in plasma and tissues lipid homeostasis. APOE is also involved in two steps of reverse cholesterol transport, the HDLs-mediated transport of cholesterol from peripheral tissues to the liver, and thereby plays an important role in cholesterol homeostasis. First, it is functionally associated with ABCA1 in the biogenesis of HDLs in tissues. Second, it is enriched in circulating HDLs and mediates their uptake by hepatocytes. APOE also plays an important role in lipid transport in the central nervous system, regulating neuron survival and sprouting. In Cebus capucinus (White-faced sapajou), this protein is Apolipoprotein E (APOE).